We begin with the raw amino-acid sequence, 138 residues long: Large ribosomal subunit protein uL16 (138 aa).

Positions 1 to 15 are enriched in basic residues; the sequence is MLSPKKVKYRKKQRG. Residues 1–20 form a disordered region; it reads MLSPKKVKYRKKQRGRLSGE.

Belongs to the universal ribosomal protein uL16 family. Part of the 50S ribosomal subunit.

Its function is as follows. Binds 23S rRNA and is also seen to make contacts with the A and possibly P site tRNAs. This chain is Large ribosomal subunit protein uL16, found in Borrelia hermsii (strain HS1 / DAH).